A 255-amino-acid polypeptide reads, in one-letter code: Taurine import ATP-binding protein TauB (255 aa).

The region spanning 2–229 (LQISHLYADY…RFVAGESSRS (228 aa)) is the ABC transporter domain. 34-41 (GPSGCGKT) is a binding site for ATP.

The protein belongs to the ABC transporter superfamily. Taurine importer (TC 3.A.1.17.1) family. In terms of assembly, the complex is composed of two ATP-binding proteins (TauB), two transmembrane proteins (TauC) and a solute-binding protein (TauA).

It localises to the cell inner membrane. The enzyme catalyses taurine(out) + ATP + H2O = taurine(in) + ADP + phosphate + H(+). In terms of biological role, part of the ABC transporter complex TauABC involved in taurine import. Responsible for energy coupling to the transport system. This chain is Taurine import ATP-binding protein TauB, found in Shigella flexneri.